Consider the following 378-residue polypeptide: MQDFLPFSKPAIGDAEISAVCEVLKSGWITTGPKSHELEQQFCDTYGCQHAVALNSATAGMHVTLMALGIGPGDEVITPSQTWVSTINLITLLGAEPVFVDVDRDTLMTSAELIAPLITVNTKAIIPVHYAGAPVDLDPILKLARQYDIPVIEDAAHAIGTRYRDRWIGATGTAIFSFHAIKNLTCAEGGMLVTDDKALADKVRMLKFHGLGVDAFDRMTLGSKPQAEVITPGFKYNLTDINAAIALIQLARLPELNARRAGLVARYQEKLAGLPLAPLAIPTYPHLHAWHLFMVRVDPERCGLDRDQLMQALQERGIGTGLHFRAAHTQKYYRERYPALSLPHTEWNSSRLCTLPLFPDMTLADVDRVVAALTDILE.

An N6-(pyridoxal phosphate)lysine modification is found at Lys182.

It belongs to the DegT/DnrJ/EryC1 family. ArnB subfamily. Homodimer. It depends on pyridoxal 5'-phosphate as a cofactor.

The enzyme catalyses UDP-4-amino-4-deoxy-beta-L-arabinose + 2-oxoglutarate = UDP-beta-L-threo-pentopyranos-4-ulose + L-glutamate. It functions in the pathway nucleotide-sugar biosynthesis; UDP-4-deoxy-4-formamido-beta-L-arabinose biosynthesis; UDP-4-deoxy-4-formamido-beta-L-arabinose from UDP-alpha-D-glucuronate: step 2/3. The protein operates within bacterial outer membrane biogenesis; lipopolysaccharide biosynthesis. In terms of biological role, catalyzes the conversion of UDP-4-keto-arabinose (UDP-Ara4O) to UDP-4-amino-4-deoxy-L-arabinose (UDP-L-Ara4N). The modified arabinose is attached to lipid A and is required for resistance to polymyxin and cationic antimicrobial peptides. The protein is UDP-4-amino-4-deoxy-L-arabinose--oxoglutarate aminotransferase of Aeromonas salmonicida (strain A449).